A 413-amino-acid polypeptide reads, in one-letter code: Arginine biosynthesis bifunctional protein ArgJ (413 aa).

Substrate contacts are provided by Thr-160, Lys-186, Thr-197, Glu-284, Asn-408, and Ser-413. Thr-197 (nucleophile) is an active-site residue.

This sequence belongs to the ArgJ family. In terms of assembly, heterotetramer of two alpha and two beta chains.

The protein resides in the cytoplasm. The enzyme catalyses N(2)-acetyl-L-ornithine + L-glutamate = N-acetyl-L-glutamate + L-ornithine. It carries out the reaction L-glutamate + acetyl-CoA = N-acetyl-L-glutamate + CoA + H(+). The protein operates within amino-acid biosynthesis; L-arginine biosynthesis; L-ornithine and N-acetyl-L-glutamate from L-glutamate and N(2)-acetyl-L-ornithine (cyclic): step 1/1. It participates in amino-acid biosynthesis; L-arginine biosynthesis; N(2)-acetyl-L-ornithine from L-glutamate: step 1/4. Catalyzes two activities which are involved in the cyclic version of arginine biosynthesis: the synthesis of N-acetylglutamate from glutamate and acetyl-CoA as the acetyl donor, and of ornithine by transacetylation between N(2)-acetylornithine and glutamate. This Burkholderia pseudomallei (strain K96243) protein is Arginine biosynthesis bifunctional protein ArgJ.